A 132-amino-acid chain; its full sequence is Small ribosomal subunit protein uS8 (132 aa).

This sequence belongs to the universal ribosomal protein uS8 family. As to quaternary structure, part of the 30S ribosomal subunit. Contacts proteins S5 and S12.

One of the primary rRNA binding proteins, it binds directly to 16S rRNA central domain where it helps coordinate assembly of the platform of the 30S subunit. In Geotalea daltonii (strain DSM 22248 / JCM 15807 / FRC-32) (Geobacter daltonii), this protein is Small ribosomal subunit protein uS8.